We begin with the raw amino-acid sequence, 310 residues long: Probable deoxyhypusine synthase (310 aa).

The active-site Nucleophile is Lys280.

The protein belongs to the deoxyhypusine synthase family. NAD(+) serves as cofactor.

It catalyses the reaction [eIF5A protein]-L-lysine + spermidine = [eIF5A protein]-deoxyhypusine + propane-1,3-diamine. It functions in the pathway protein modification; eIF5A hypusination. Functionally, catalyzes the NAD-dependent oxidative cleavage of spermidine and the subsequent transfer of the butylamine moiety of spermidine to the epsilon-amino group of a specific lysine residue of the eIF-5A precursor protein to form the intermediate deoxyhypusine residue. This Aeropyrum pernix (strain ATCC 700893 / DSM 11879 / JCM 9820 / NBRC 100138 / K1) protein is Probable deoxyhypusine synthase (dys).